The chain runs to 293 residues: DNA repair protein RecO (293 aa).

It belongs to the RecO family.

Involved in DNA repair and RecF pathway recombination. The sequence is that of DNA repair protein RecO from Cyanothece sp. (strain PCC 7425 / ATCC 29141).